The primary structure comprises 222 residues: Protein GrpE (222 aa).

Disordered regions lie at residues 1–21 (MNDGFAMNTHSKDERAPENGQ) and 200–222 (KGGPKAETPAATSEQAAQGPEGA).

It belongs to the GrpE family. As to quaternary structure, homodimer.

The protein localises to the cytoplasm. Functionally, participates actively in the response to hyperosmotic and heat shock by preventing the aggregation of stress-denatured proteins, in association with DnaK and GrpE. It is the nucleotide exchange factor for DnaK and may function as a thermosensor. Unfolded proteins bind initially to DnaJ; upon interaction with the DnaJ-bound protein, DnaK hydrolyzes its bound ATP, resulting in the formation of a stable complex. GrpE releases ADP from DnaK; ATP binding to DnaK triggers the release of the substrate protein, thus completing the reaction cycle. Several rounds of ATP-dependent interactions between DnaJ, DnaK and GrpE are required for fully efficient folding. This Chelativorans sp. (strain BNC1) protein is Protein GrpE.